The primary structure comprises 251 residues: Uridylate kinase (251 aa).

An ATP-binding site is contributed by 19-22 (KLSG). UMP is bound at residue Gly61. Positions 62 and 66 each coordinate ATP. Residues Asp81 and 142–149 (TGNPYFTT) each bind UMP. ATP is bound by residues Thr169, Tyr175, and Asp178.

The protein belongs to the UMP kinase family. In terms of assembly, homohexamer.

It localises to the cytoplasm. The catalysed reaction is UMP + ATP = UDP + ADP. It participates in pyrimidine metabolism; CTP biosynthesis via de novo pathway; UDP from UMP (UMPK route): step 1/1. With respect to regulation, inhibited by UTP. Catalyzes the reversible phosphorylation of UMP to UDP. The protein is Uridylate kinase of Anaeromyxobacter dehalogenans (strain 2CP-C).